A 207-amino-acid polypeptide reads, in one-letter code: Ribosome maturation factor RimP (207 aa).

Belongs to the RimP family.

It localises to the cytoplasm. Its function is as follows. Required for maturation of 30S ribosomal subunits. This chain is Ribosome maturation factor RimP, found in Parvibaculum lavamentivorans (strain DS-1 / DSM 13023 / NCIMB 13966).